A 107-amino-acid polypeptide reads, in one-letter code: uncharacterized protein (107 aa).

Residues 34-107 are a coiled coil; sequence FASKDKKDEK…SDNQKKDMSY (74 aa).

This is an uncharacterized protein from Dictyostelium discoideum (Social amoeba).